The chain runs to 300 residues: Mitochondrial carnitine/acylcarnitine carrier-like protein (300 aa).

Solcar repeat units lie at residues 2-93 (ADAW…MEGL), 102-201 (LTIS…FKRF), and 211-298 (LGQG…TRSS). 6 consecutive transmembrane segments (helical) span residues 8-28 (LASG…FDTI), 64-84 (GLYK…AVLF), 108-128 (FVAG…TELI), 176-195 (GLFP…FAAY), 211-231 (LGQG…WGIV), and 273-292 (GFGP…FLAY).

It belongs to the mitochondrial carrier (TC 2.A.29) family. In terms of tissue distribution, high expression in cotyledons, leaves, flowers and developing siliques. Lower expression in roots and maturing siliques. Not detected in meristematic tissues.

Its subcellular location is the mitochondrion inner membrane. Its function is as follows. Involved in photorespiratory metabolism. Acts probably as a carrier for a glycine decarboxylase (GDC) cofactor or, alternatively, may act as a mitochondrial glycine shuttle. Involved in the transition from the embryonic stage to the juvenile autotrophic stage. This Arabidopsis thaliana (Mouse-ear cress) protein is Mitochondrial carnitine/acylcarnitine carrier-like protein (BOU).